Reading from the N-terminus, the 277-residue chain is Putative thiosulfate sulfurtransferase (277 aa).

Rhodanese domains are found at residues Asp-18–Thr-125 and Ser-154–Glu-274. The active-site Cysteine persulfide intermediate is the Cys-233. Arg-238 provides a ligand contact to substrate.

The catalysed reaction is thiosulfate + hydrogen cyanide = thiocyanate + sulfite + 2 H(+). Its function is as follows. May be a sulfotransferase involved in the formation of thiosulfate. The sequence is that of Putative thiosulfate sulfurtransferase (cysA) from Mycobacterium leprae (strain TN).